The following is an 899-amino-acid chain: Lipoxygenase 2, chloroplastic (899 aa).

Residues 1–57 (MLKPQIHKPHLVNKLPLGTPFIPSHASIASFSTTSLRTLSVQKCYRRYIRYTSSNIK) constitute a chloroplast transit peptide. The PLAT domain occupies 83 to 203 (ALTAVTVGLL…DNPDKRIFFL (121 aa)). The Lipoxygenase domain maps to 206-899 (SYLPSETPEG…GKGVPYSISI (694 aa)). The disordered stretch occupies residues 252–286 (DPDTDSDMARPVLGGNEHPFPRRCRTGRKMTSTEP). Fe cation is bound by residues His-557, His-562, His-749, Asn-753, and Ile-899.

Belongs to the lipoxygenase family. Fe cation serves as cofactor. In terms of tissue distribution, confined to glandular trichomes in flowers.

It is found in the plastid. Its subcellular location is the chloroplast. The protein operates within lipid metabolism; oxylipin biosynthesis. Plant lipoxygenases may be involved in a number of diverse aspects of plant physiology including growth and development, pest resistance, and senescence or responses to wounding. Catalyzes the hydroperoxidation of lipids containing a cis,cis-1,4-pentadiene structure. The chain is Lipoxygenase 2, chloroplastic from Tanacetum cinerariifolium (Dalmatian daisy).